Consider the following 283-residue polypeptide: UPF0276 protein Nmul_A2550 (283 aa).

Belongs to the UPF0276 family.

The polypeptide is UPF0276 protein Nmul_A2550 (Nitrosospira multiformis (strain ATCC 25196 / NCIMB 11849 / C 71)).